The primary structure comprises 168 residues: Mitochondrial inner membrane protein Mpv17 (168 aa).

4 helical membrane passes run 12 to 29 (INVA…QFFF), 41 to 61 (RTLR…RRWY), 82 to 101 (MLVD…SFLV), and 144 to 166 (LGYQ…SMIL).

The protein belongs to the peroxisomal membrane protein PXMP2/4 family. As to quaternary structure, part of a larger complex that may be a homohexamer.

It is found in the mitochondrion inner membrane. Functionally, non-selective channel that modulates the membrane potential under normal conditions and oxidative stress, and is involved in mitochondrial homeostasis. Can translocate uridine, but not orotate, across a lipid membrane. Involved in maintenance of mitochondrial ultrastructure. May be involved in mitochondrial DNA (mtDNA) maintenance but does not appear to be directly involved in mitochondrial deoxynucleoside triphosphate (dNTP) pool homeostasis. May be involved in the regulation of reactive oxygen species metabolism and the control of oxidative phosphorylation. The sequence is that of Mitochondrial inner membrane protein Mpv17 from Drosophila melanogaster (Fruit fly).